Here is a 211-residue protein sequence, read N- to C-terminus: Imidazole glycerol phosphate synthase subunit HisH (211 aa).

The Glutamine amidotransferase type-1 domain maps to 3–211 (VVAVIDYEMG…VSQVREKIAA (209 aa)). Residue Cys-81 is the Nucleophile of the active site. Catalysis depends on residues His-186 and Glu-188.

Heterodimer of HisH and HisF.

Its subcellular location is the cytoplasm. It carries out the reaction 5-[(5-phospho-1-deoxy-D-ribulos-1-ylimino)methylamino]-1-(5-phospho-beta-D-ribosyl)imidazole-4-carboxamide + L-glutamine = D-erythro-1-(imidazol-4-yl)glycerol 3-phosphate + 5-amino-1-(5-phospho-beta-D-ribosyl)imidazole-4-carboxamide + L-glutamate + H(+). The enzyme catalyses L-glutamine + H2O = L-glutamate + NH4(+). It functions in the pathway amino-acid biosynthesis; L-histidine biosynthesis; L-histidine from 5-phospho-alpha-D-ribose 1-diphosphate: step 5/9. Functionally, IGPS catalyzes the conversion of PRFAR and glutamine to IGP, AICAR and glutamate. The HisH subunit catalyzes the hydrolysis of glutamine to glutamate and ammonia as part of the synthesis of IGP and AICAR. The resulting ammonia molecule is channeled to the active site of HisF. This Trichormus variabilis (strain ATCC 29413 / PCC 7937) (Anabaena variabilis) protein is Imidazole glycerol phosphate synthase subunit HisH.